The following is a 214-amino-acid chain: Adenylate kinase (214 aa).

Gly10 to Thr15 contributes to the ATP binding site. Residues Ser30–Val59 are NMP. AMP-binding positions include Thr31, Arg36, Ala57–Val59, Gly85–Arg88, and Gln92. The interval Gly126–Asp163 is LID. An ATP-binding site is contributed by Arg127. 4 residues coordinate Zn(2+): Cys130, Cys133, Cys150, and Cys153. AMP is bound by residues Arg160 and Arg171. Gly199 is a binding site for ATP.

Belongs to the adenylate kinase family. Monomer.

The protein resides in the cytoplasm. The enzyme catalyses AMP + ATP = 2 ADP. Its pathway is purine metabolism; AMP biosynthesis via salvage pathway; AMP from ADP: step 1/1. Functionally, catalyzes the reversible transfer of the terminal phosphate group between ATP and AMP. Plays an important role in cellular energy homeostasis and in adenine nucleotide metabolism. The polypeptide is Adenylate kinase (Geotalea daltonii (strain DSM 22248 / JCM 15807 / FRC-32) (Geobacter daltonii)).